The sequence spans 143 residues: Heat shock protein Hsp-16.48/Hsp-16.49 (143 aa).

The region spanning His35 to Val140 is the sHSP domain.

Belongs to the small heat shock protein (HSP20) family.

The protein is Heat shock protein Hsp-16.48/Hsp-16.49 (hsp-16.48) of Caenorhabditis elegans.